The primary structure comprises 741 residues: NAD(P)H-quinone oxidoreductase subunit 5, chloroplastic (741 aa).

The next 16 helical transmembrane spans lie at 9–29, 40–60, 89–109, 125–145, 147–167, 185–205, 219–239, 258–278, 283–303, 327–347, 354–374, 396–416, 425–445, 549–569, 605–625, and 718–738; these read WIIP…LLLF, WAFQ…NLSI, IDPL…MVLI, FAYM…SNLI, IYIF…FWFT, GDFG…SFEF, NEVN…GAIA, TPIS…FLVA, LFIV…ITVF, LGYM…FHLI, ALLF…VGYC, NSFL…CFWS, WLYS…TAFY, LFPI…GIPF, VFSV…YKPV, and ISSY…IYYF.

This sequence belongs to the complex I subunit 5 family. NDH is composed of at least 16 different subunits, 5 of which are encoded in the nucleus.

It localises to the plastid. The protein resides in the chloroplast thylakoid membrane. It carries out the reaction a plastoquinone + NADH + (n+1) H(+)(in) = a plastoquinol + NAD(+) + n H(+)(out). The catalysed reaction is a plastoquinone + NADPH + (n+1) H(+)(in) = a plastoquinol + NADP(+) + n H(+)(out). Its function is as follows. NDH shuttles electrons from NAD(P)H:plastoquinone, via FMN and iron-sulfur (Fe-S) centers, to quinones in the photosynthetic chain and possibly in a chloroplast respiratory chain. The immediate electron acceptor for the enzyme in this species is believed to be plastoquinone. Couples the redox reaction to proton translocation, and thus conserves the redox energy in a proton gradient. This Athroisma gracile protein is NAD(P)H-quinone oxidoreductase subunit 5, chloroplastic (ndhF).